A 338-amino-acid polypeptide reads, in one-letter code: tRNA-specific 2-thiouridylase MnmA (338 aa).

ATP is bound by residues 6 to 13 (AMSGGVDS) and Met-32. The active-site Nucleophile is the Cys-92. A disulfide bond links Cys-92 and Cys-186. Residue Gly-116 coordinates ATP. The segment at 134–136 (KDQ) is interaction with tRNA. Cys-186 (cysteine persulfide intermediate) is an active-site residue. Residues 288 to 289 (RY) form an interaction with tRNA region.

It belongs to the MnmA/TRMU family.

It is found in the cytoplasm. The enzyme catalyses S-sulfanyl-L-cysteinyl-[protein] + uridine(34) in tRNA + AH2 + ATP = 2-thiouridine(34) in tRNA + L-cysteinyl-[protein] + A + AMP + diphosphate + H(+). Its function is as follows. Catalyzes the 2-thiolation of uridine at the wobble position (U34) of tRNA, leading to the formation of s(2)U34. This is tRNA-specific 2-thiouridylase MnmA from Campylobacter lari (strain RM2100 / D67 / ATCC BAA-1060).